A 417-amino-acid polypeptide reads, in one-letter code: Tyrosine--tRNA ligase (417 aa).

Tyrosine 35 contacts L-tyrosine. Residues 40–49 (ATAGSLTVGH) carry the 'HIGH' region motif. Residues tyrosine 165 and glutamine 169 each coordinate L-tyrosine. Residues 229–233 (KFGKS) carry the 'KMSKS' region motif. Lysine 232 lines the ATP pocket. An S4 RNA-binding domain is found at 350–416 (ISLLEALVFT…GKRFNALIIF (67 aa)).

Belongs to the class-I aminoacyl-tRNA synthetase family. TyrS type 1 subfamily. In terms of assembly, homodimer.

Its subcellular location is the cytoplasm. The enzyme catalyses tRNA(Tyr) + L-tyrosine + ATP = L-tyrosyl-tRNA(Tyr) + AMP + diphosphate + H(+). Catalyzes the attachment of tyrosine to tRNA(Tyr) in a two-step reaction: tyrosine is first activated by ATP to form Tyr-AMP and then transferred to the acceptor end of tRNA(Tyr). The sequence is that of Tyrosine--tRNA ligase from Phytoplasma mali (strain AT).